The chain runs to 181 residues: Oligoribonuclease (181 aa).

Positions 8–171 constitute an Exonuclease domain; the sequence is LIWIDLEMTG…QDIQESIAEL (164 aa). Residue Y129 is part of the active site.

It belongs to the oligoribonuclease family.

Its subcellular location is the cytoplasm. In terms of biological role, 3'-to-5' exoribonuclease specific for small oligoribonucleotides. The sequence is that of Oligoribonuclease from Shewanella oneidensis (strain ATCC 700550 / JCM 31522 / CIP 106686 / LMG 19005 / NCIMB 14063 / MR-1).